The chain runs to 394 residues: Bifunctional enzyme IspD/IspF (394 aa).

Positions Met1–Val230 are 2-C-methyl-D-erythritol 4-phosphate cytidylyltransferase. The segment at Leu231–Leu394 is 2-C-methyl-D-erythritol 2,4-cyclodiphosphate synthase. The a divalent metal cation site is built by Asp237 and His239. 4-CDP-2-C-methyl-D-erythritol 2-phosphate is bound by residues Asp237–His239 and His263–Ser264. His271 contributes to the a divalent metal cation binding site. Residues Asp285–Gly287, Phe290–Asp294, Thr361–Glu364, and Phe368 each bind 4-CDP-2-C-methyl-D-erythritol 2-phosphate.

In the N-terminal section; belongs to the IspD/TarI cytidylyltransferase family. IspD subfamily. This sequence in the C-terminal section; belongs to the IspF family. A divalent metal cation serves as cofactor.

It catalyses the reaction 2-C-methyl-D-erythritol 4-phosphate + CTP + H(+) = 4-CDP-2-C-methyl-D-erythritol + diphosphate. It carries out the reaction 4-CDP-2-C-methyl-D-erythritol 2-phosphate = 2-C-methyl-D-erythritol 2,4-cyclic diphosphate + CMP. The protein operates within isoprenoid biosynthesis; isopentenyl diphosphate biosynthesis via DXP pathway; isopentenyl diphosphate from 1-deoxy-D-xylulose 5-phosphate: step 2/6. It participates in isoprenoid biosynthesis; isopentenyl diphosphate biosynthesis via DXP pathway; isopentenyl diphosphate from 1-deoxy-D-xylulose 5-phosphate: step 4/6. Functionally, bifunctional enzyme that catalyzes the formation of 4-diphosphocytidyl-2-C-methyl-D-erythritol from CTP and 2-C-methyl-D-erythritol 4-phosphate (MEP) (IspD), and catalyzes the conversion of 4-diphosphocytidyl-2-C-methyl-D-erythritol 2-phosphate (CDP-ME2P) to 2-C-methyl-D-erythritol 2,4-cyclodiphosphate (ME-CPP) with a corresponding release of cytidine 5-monophosphate (CMP) (IspF). In Desulforudis audaxviator (strain MP104C), this protein is Bifunctional enzyme IspD/IspF.